We begin with the raw amino-acid sequence, 323 residues long: Fructose-1,6-bisphosphatase class 1 (323 aa).

Mg(2+)-binding residues include Glu84, Asp103, Leu105, and Asp106. Residues 106 to 109 (DGSS), Asn198, and Lys264 each bind substrate. Position 270 (Glu270) interacts with Mg(2+).

This sequence belongs to the FBPase class 1 family. Homotetramer. Mg(2+) is required as a cofactor.

Its subcellular location is the cytoplasm. The catalysed reaction is beta-D-fructose 1,6-bisphosphate + H2O = beta-D-fructose 6-phosphate + phosphate. It participates in carbohydrate biosynthesis; gluconeogenesis. The sequence is that of Fructose-1,6-bisphosphatase class 1 from Hydrogenovibrio crunogenus (strain DSM 25203 / XCL-2) (Thiomicrospira crunogena).